We begin with the raw amino-acid sequence, 371 residues long: Phosphatase IMPL1, chloroplastic (371 aa).

Residues 1–60 (MGRSLIFSGNMSLRISHLPRSSLPLQNPISGRTVNRTFRYRCTRILSNSFKSTTRLQTKA) constitute a chloroplast transit peptide. Val61 carries the post-translational modification N-acetylvaline. Glu148, Asp165, Leu167, and Asp168 together coordinate Mg(2+). Glu148 provides a ligand contact to substrate. Substrate is bound by residues 167–170 (LDGT), 273–275 (GAA), Glu292, and Asp299. Asp299 contributes to the Mg(2+) binding site.

This sequence belongs to the inositol monophosphatase superfamily. Mg(2+) is required as a cofactor. As to expression, ubiquitous. Expressed in pistil and seed endosperm.

Its subcellular location is the plastid. It localises to the chloroplast stroma. The enzyme catalyses a myo-inositol phosphate + H2O = myo-inositol + phosphate. Its pathway is polyol metabolism; myo-inositol biosynthesis; myo-inositol from D-glucose 6-phosphate: step 2/2. Phosphatase acting preferentially on D-myoinositol 1-phosphate (D-Ins 1-P). This is Phosphatase IMPL1, chloroplastic (IMPL1) from Arabidopsis thaliana (Mouse-ear cress).